Reading from the N-terminus, the 134-residue chain is MAKTLGLHIIADLYGVNPDLIDREEDIRHLLENSVKAGELTKISSHFYQFNPHGATGVILLAESHISIHTWPEHKTATVDVFTCGDPSKAYRAMDYIINSLSPTHVDKKVFDRGIIEDSKGKDVLWIMSKAGCC.

Ser-64 functions as the Schiff-base intermediate with substrate; via pyruvic acid in the catalytic mechanism. The residue at position 64 (Ser-64) is a Pyruvic acid (Ser); by autocatalysis. His-69 serves as the catalytic Proton acceptor; for processing activity. Cys-84 (proton donor; for catalytic activity) is an active-site residue.

The protein belongs to the prokaryotic AdoMetDC family. Type 1 subfamily. Heterotetramer of two alpha and two beta chains arranged as a dimer of alpha/beta heterodimers. It depends on pyruvate as a cofactor. Post-translationally, is synthesized initially as an inactive proenzyme. Formation of the active enzyme involves a self-maturation process in which the active site pyruvoyl group is generated from an internal serine residue via an autocatalytic post-translational modification. Two non-identical subunits are generated from the proenzyme in this reaction, and the pyruvate is formed at the N-terminus of the alpha chain, which is derived from the carboxyl end of the proenzyme. The post-translation cleavage follows an unusual pathway, termed non-hydrolytic serinolysis, in which the side chain hydroxyl group of the serine supplies its oxygen atom to form the C-terminus of the beta chain, while the remainder of the serine residue undergoes an oxidative deamination to produce ammonia and the pyruvoyl group blocking the N-terminus of the alpha chain.

It catalyses the reaction S-adenosyl-L-methionine + H(+) = S-adenosyl 3-(methylsulfanyl)propylamine + CO2. The protein operates within amine and polyamine biosynthesis; S-adenosylmethioninamine biosynthesis; S-adenosylmethioninamine from S-adenosyl-L-methionine: step 1/1. Functionally, catalyzes the decarboxylation of S-adenosylmethionine to S-adenosylmethioninamine (dcAdoMet), the propylamine donor required for the synthesis of the polyamines spermine and spermidine from the diamine putrescine. This Hydrogenobaculum sp. (strain Y04AAS1) protein is S-adenosylmethionine decarboxylase proenzyme.